We begin with the raw amino-acid sequence, 642 residues long: Threonine--tRNA ligase (642 aa).

Residues 1–61 (MPIITLPDGS…EHDASLEIIT (61 aa)) enclose the TGS domain. The catalytic stretch occupies residues 244–535 (DHRKIGKQLD…LIEEYAGFFP (292 aa)). Zn(2+)-binding residues include Cys-335, His-386, and His-512.

This sequence belongs to the class-II aminoacyl-tRNA synthetase family. As to quaternary structure, homodimer. Zn(2+) serves as cofactor.

It localises to the cytoplasm. The catalysed reaction is tRNA(Thr) + L-threonine + ATP = L-threonyl-tRNA(Thr) + AMP + diphosphate + H(+). Catalyzes the attachment of threonine to tRNA(Thr) in a two-step reaction: L-threonine is first activated by ATP to form Thr-AMP and then transferred to the acceptor end of tRNA(Thr). Also edits incorrectly charged L-seryl-tRNA(Thr). This is Threonine--tRNA ligase from Vibrio cholerae serotype O1 (strain M66-2).